A 156-amino-acid polypeptide reads, in one-letter code: Protein-export protein SecB (156 aa).

This sequence belongs to the SecB family. As to quaternary structure, homotetramer, a dimer of dimers. One homotetramer interacts with 1 SecA dimer.

The protein resides in the cytoplasm. Its function is as follows. One of the proteins required for the normal export of preproteins out of the cell cytoplasm. It is a molecular chaperone that binds to a subset of precursor proteins, maintaining them in a translocation-competent state. It also specifically binds to its receptor SecA. This is Protein-export protein SecB from Paraburkholderia xenovorans (strain LB400).